The sequence spans 1291 residues: DNA-directed RNA polymerase subunit beta' (1291 aa).

Residues C60, C62, C75, and C78 each coordinate Zn(2+). Mg(2+) is bound by residues D535, D537, and D539. Zn(2+) contacts are provided by C874, C951, C958, and C961.

It belongs to the RNA polymerase beta' chain family. As to quaternary structure, the RNAP catalytic core consists of 2 alpha, 1 beta, 1 beta' and 1 omega subunit. When a sigma factor is associated with the core the holoenzyme is formed, which can initiate transcription. Requires Mg(2+) as cofactor. Zn(2+) serves as cofactor.

It carries out the reaction RNA(n) + a ribonucleoside 5'-triphosphate = RNA(n+1) + diphosphate. In terms of biological role, DNA-dependent RNA polymerase catalyzes the transcription of DNA into RNA using the four ribonucleoside triphosphates as substrates. This Leifsonia xyli subsp. xyli (strain CTCB07) protein is DNA-directed RNA polymerase subunit beta'.